The following is a 548-amino-acid chain: DNA ligase (548 aa).

Glutamate 196 contributes to the ATP binding site. Lysine 198 acts as the N6-AMP-lysine intermediate in catalysis. The ATP site is built by arginine 203, arginine 218, glutamate 250, and phenylalanine 284. Glutamate 250 is a binding site for a divalent metal cation. Glutamate 345 contributes to the a divalent metal cation binding site. Residues arginine 361 and lysine 365 each coordinate ATP. A disordered region spans residues 515–548 (EQLIRNSQENTKKTFARLATTYDGPSPNKKLKLN).

The protein belongs to the ATP-dependent DNA ligase family. It depends on a divalent metal cation as a cofactor.

The catalysed reaction is ATP + (deoxyribonucleotide)n-3'-hydroxyl + 5'-phospho-(deoxyribonucleotide)m = (deoxyribonucleotide)n+m + AMP + diphosphate.. Able to ligate a double-stranded synthetic DNA substrate containing a single nick and inefficiently ligated a 1 nucleotide gap but did not ligate a 2 nucleotide gap. It is able to ligate short, complementary overhangs but not blunt-ended double-stranded DNA. May be implicated in DNA repair and recombination. In Lepidoptera (butterflies and moths), this protein is DNA ligase (LIG).